A 152-amino-acid chain; its full sequence is Probable flagellum biosynthesis repressor protein FlbT (152 aa).

It belongs to the FlbT family.

Functionally, has a post-transcriptional repressor function in flagellum biogenesis. Associates with the 5'-UTR of fljK mRNA and promotes its degradation. The protein is Probable flagellum biosynthesis repressor protein FlbT of Brucella canis (strain ATCC 23365 / NCTC 10854 / RM-666).